The chain runs to 129 residues: Small ribosomal subunit protein uS9 (129 aa).

Belongs to the universal ribosomal protein uS9 family.

In Thermoplasma acidophilum (strain ATCC 25905 / DSM 1728 / JCM 9062 / NBRC 15155 / AMRC-C165), this protein is Small ribosomal subunit protein uS9 (rps9).